A 282-amino-acid polypeptide reads, in one-letter code: Stress response regulator protein 1 (282 aa).

Composition is skewed to low complexity over residues 12-30 (NLSR…HSST) and 41-58 (SLDT…SNNN). Disordered regions lie at residues 12–31 (NLSR…SSTV), 41–84 (SLDT…DDED), and 112–139 (LTPF…TTVV). The span at 66–77 (SDYNSYTHNQYY) shows a compositional bias: polar residues. Over residues 125 to 139 (SIISSKSSNKSTTVV) the composition is skewed to low complexity. A Response regulatory domain is found at 155–273 (SFLIVDDNII…LDFMANSIDD (119 aa)). At aspartate 206 the chain carries 4-aspartylphosphate.

In terms of biological role, required for stress adaptation, morphogenesis and virulence. The protein is Stress response regulator protein 1 (SRR1) of Candida albicans (strain WO-1) (Yeast).